The following is a 60-amino-acid chain: Rubredoxin 4 (60 aa).

The Rubredoxin-like domain maps to 4 to 55 (YKLYQCAQCGFEYDEAVGWPEDGIEPGTRWDDIPEDWSCPDCGAAKSDFFMV). The Fe cation site is built by C9, C12, C42, and C45.

It belongs to the rubredoxin family. Fe(3+) is required as a cofactor.

Involved in the hydrocarbon hydroxylating system, which transfers electrons from NADH to rubredoxin reductase and then through rubredoxin to alkane 1 monooxygenase. The protein is Rubredoxin 4 (rubA4) of Rhodococcus sp. (strain Q15).